Reading from the N-terminus, the 486-residue chain is N-succinylglutamate 5-semialdehyde dehydrogenase (486 aa).

220 to 225 (GSSRTG) is an NAD(+) binding site. Catalysis depends on residues E243 and C277.

The protein belongs to the aldehyde dehydrogenase family. AstD subfamily.

The enzyme catalyses N-succinyl-L-glutamate 5-semialdehyde + NAD(+) + H2O = N-succinyl-L-glutamate + NADH + 2 H(+). It participates in amino-acid degradation; L-arginine degradation via AST pathway; L-glutamate and succinate from L-arginine: step 4/5. Its function is as follows. Catalyzes the NAD-dependent reduction of succinylglutamate semialdehyde into succinylglutamate. The sequence is that of N-succinylglutamate 5-semialdehyde dehydrogenase from Shewanella baltica (strain OS155 / ATCC BAA-1091).